A 306-amino-acid polypeptide reads, in one-letter code: Ornithine carbamoyltransferase (306 aa).

Carbamoyl phosphate-binding positions include 46-49, glutamine 73, arginine 97, and 124-127; these read STRT and HPTQ. L-ornithine is bound by residues asparagine 156, aspartate 220, and 224–225; that span reads SM. Residues 260–261 and arginine 288 each bind carbamoyl phosphate; that span reads CL.

This sequence belongs to the aspartate/ornithine carbamoyltransferase superfamily. OTCase family.

The protein resides in the cytoplasm. The catalysed reaction is carbamoyl phosphate + L-ornithine = L-citrulline + phosphate + H(+). Its pathway is amino-acid degradation; L-arginine degradation via ADI pathway; carbamoyl phosphate from L-arginine: step 2/2. Functionally, reversibly catalyzes the transfer of the carbamoyl group from carbamoyl phosphate (CP) to the N(epsilon) atom of ornithine (ORN) to produce L-citrulline. The sequence is that of Ornithine carbamoyltransferase from Campylobacter jejuni subsp. doylei (strain ATCC BAA-1458 / RM4099 / 269.97).